A 381-amino-acid chain; its full sequence is tRNA-cytidine(32) 2-sulfurtransferase (381 aa).

The PP-loop motif motif lies at Ser101–Ser106. [4Fe-4S] cluster contacts are provided by Cys176, Cys179, and Cys267.

It belongs to the TtcA family. In terms of assembly, homodimer. Mg(2+) serves as cofactor. [4Fe-4S] cluster is required as a cofactor.

The protein resides in the cytoplasm. It carries out the reaction cytidine(32) in tRNA + S-sulfanyl-L-cysteinyl-[cysteine desulfurase] + AH2 + ATP = 2-thiocytidine(32) in tRNA + L-cysteinyl-[cysteine desulfurase] + A + AMP + diphosphate + H(+). Its pathway is tRNA modification. In terms of biological role, catalyzes the ATP-dependent 2-thiolation of cytidine in position 32 of tRNA, to form 2-thiocytidine (s(2)C32). The sulfur atoms are provided by the cysteine/cysteine desulfurase (IscS) system. The sequence is that of tRNA-cytidine(32) 2-sulfurtransferase from Psychrobacter cryohalolentis (strain ATCC BAA-1226 / DSM 17306 / VKM B-2378 / K5).